A 59-amino-acid chain; its full sequence is MNSVSTQLILVLASLLLILPVVEAVEAGDAIALLLGVVLSITGICACLGIYARKRNGQM.

Residues 1–24 (MNSVSTQLILVLASLLLILPVVEA) form the signal peptide. The Extracellular segment spans residues 25–29 (VEAGD). The chain crosses the membrane as a helical span at residues 30–50 (AIALLLGVVLSITGICACLGI). At 51–59 (YARKRNGQM) the chain is on the cytoplasmic side.

Interacts (via transmembrane domain) with antiviral protein MAVS (via transmembrane domain); the interaction disrupts MAVS interaction with RIGI and inhibits MAVS aggregation, resulting in the repression of type I interferon signaling and innate immune responses.

The protein localises to the endoplasmic reticulum membrane. It localises to the mitochondrion membrane. Negatively regulates antiviral innate immune responses. Disrupts the interaction of antiviral protein MAVS with innate immune receptor RIGI and inhibits MAVS aggregation, resulting in the repression of type I interferon signaling and innate immune responses. In Mus musculus (Mouse), this protein is Small integral membrane protein 30.